Reading from the N-terminus, the 159-residue chain is Small ribosomal subunit protein uS13 (159 aa).

Residues 136–159 are disordered; that stretch reads QRTRSTGRSGATVGVTRKKTQAKK. A compositionally biased stretch (low complexity) spans 138 to 149; it reads TRSTGRSGATVG.

Belongs to the universal ribosomal protein uS13 family. As to quaternary structure, part of the 30S ribosomal subunit. Forms a loose heterodimer with protein S19. Forms two bridges to the 50S subunit in the 70S ribosome.

Its function is as follows. Located at the top of the head of the 30S subunit, it contacts several helices of the 16S rRNA. In the 70S ribosome it contacts the 23S rRNA (bridge B1a) and protein L5 of the 50S subunit (bridge B1b), connecting the 2 subunits; these bridges are implicated in subunit movement. This Methanothrix thermoacetophila (strain DSM 6194 / JCM 14653 / NBRC 101360 / PT) (Methanosaeta thermophila) protein is Small ribosomal subunit protein uS13.